We begin with the raw amino-acid sequence, 145 residues long: Deoxyuridine 5'-triphosphate nucleotidohydrolase (145 aa).

Substrate-binding positions include 63–65 (RSG), Asn-76, 80–82 (TID), and Lys-90.

Belongs to the dUTPase family. Mg(2+) is required as a cofactor.

It carries out the reaction dUTP + H2O = dUMP + diphosphate + H(+). It functions in the pathway pyrimidine metabolism; dUMP biosynthesis; dUMP from dCTP (dUTP route): step 2/2. This enzyme is involved in nucleotide metabolism: it produces dUMP, the immediate precursor of thymidine nucleotides and it decreases the intracellular concentration of dUTP so that uracil cannot be incorporated into DNA. This Clostridium acetobutylicum (strain ATCC 824 / DSM 792 / JCM 1419 / IAM 19013 / LMG 5710 / NBRC 13948 / NRRL B-527 / VKM B-1787 / 2291 / W) protein is Deoxyuridine 5'-triphosphate nucleotidohydrolase.